A 330-amino-acid chain; its full sequence is Methylthioribose-1-phosphate isomerase (330 aa).

Substrate-binding positions include 49–51 (RGA), arginine 83, and glutamine 179. Aspartate 220 acts as the Proton donor in catalysis. 230–231 (NK) is a binding site for substrate.

Belongs to the eIF-2B alpha/beta/delta subunits family. MtnA subfamily.

It catalyses the reaction 5-(methylsulfanyl)-alpha-D-ribose 1-phosphate = 5-(methylsulfanyl)-D-ribulose 1-phosphate. It participates in amino-acid biosynthesis; L-methionine biosynthesis via salvage pathway; L-methionine from S-methyl-5-thio-alpha-D-ribose 1-phosphate: step 1/6. Catalyzes the interconversion of methylthioribose-1-phosphate (MTR-1-P) into methylthioribulose-1-phosphate (MTRu-1-P). This Thermus thermophilus (strain ATCC 27634 / DSM 579 / HB8) protein is Methylthioribose-1-phosphate isomerase.